Here is a 387-residue protein sequence, read N- to C-terminus: tRNA pseudouridine synthase B (387 aa).

The active-site Nucleophile is Asp-43.

Belongs to the pseudouridine synthase TruB family. Type 1 subfamily.

It catalyses the reaction uridine(55) in tRNA = pseudouridine(55) in tRNA. Functionally, responsible for synthesis of pseudouridine from uracil-55 in the psi GC loop of transfer RNAs. This Bifidobacterium longum subsp. infantis (strain ATCC 15697 / DSM 20088 / JCM 1222 / NCTC 11817 / S12) protein is tRNA pseudouridine synthase B.